The primary structure comprises 314 residues: Methionyl-tRNA formyltransferase (314 aa).

Position 109–112 (109–112 (SLLP)) interacts with (6S)-5,6,7,8-tetrahydrofolate.

Belongs to the Fmt family.

It catalyses the reaction L-methionyl-tRNA(fMet) + (6R)-10-formyltetrahydrofolate = N-formyl-L-methionyl-tRNA(fMet) + (6S)-5,6,7,8-tetrahydrofolate + H(+). Functionally, attaches a formyl group to the free amino group of methionyl-tRNA(fMet). The formyl group appears to play a dual role in the initiator identity of N-formylmethionyl-tRNA by promoting its recognition by IF2 and preventing the misappropriation of this tRNA by the elongation apparatus. This chain is Methionyl-tRNA formyltransferase, found in Syntrophomonas wolfei subsp. wolfei (strain DSM 2245B / Goettingen).